The following is a 421-amino-acid chain: Testin (421 aa).

One can recognise a PET domain in the interval 92 to 199 (MILTNPVAAK…GDVKLPCEMD (108 aa)). LIM zinc-binding domains follow at residues 234–297 (YSCY…CDSE), 299–359 (PRCA…NHAV), and 362–421 (QGCH…KRMS).

This sequence belongs to the prickle / espinas / testin family. As to quaternary structure, interacts via LIM domain 1 with ZYX. Interacts (via LIM domain 3) with ENAH and VASP. Interacts with ALKBH4, talin, actin, alpha-actinin, GRIP1 and PXN. Interacts (via LIM domain 2) with ACTL7A (via N-terminus). Heterodimer with ACTL7A; the heterodimer interacts with ENAH to form a heterotrimer.

The protein localises to the cytoplasm. It localises to the cell junction. It is found in the focal adhesion. Functionally, scaffold protein that may play a role in cell adhesion, cell spreading and in the reorganization of the actin cytoskeleton. Plays a role in the regulation of cell proliferation. May act as a tumor suppressor. This is Testin (TES) from Nomascus leucogenys (Northern white-cheeked gibbon).